A 338-amino-acid polypeptide reads, in one-letter code: Methionyl-tRNA formyltransferase (338 aa).

Position 110 to 113 (110 to 113 (SLLP)) interacts with (6S)-5,6,7,8-tetrahydrofolate.

The protein belongs to the Fmt family.

It catalyses the reaction L-methionyl-tRNA(fMet) + (6R)-10-formyltetrahydrofolate = N-formyl-L-methionyl-tRNA(fMet) + (6S)-5,6,7,8-tetrahydrofolate + H(+). In terms of biological role, attaches a formyl group to the free amino group of methionyl-tRNA(fMet). The formyl group appears to play a dual role in the initiator identity of N-formylmethionyl-tRNA by promoting its recognition by IF2 and preventing the misappropriation of this tRNA by the elongation apparatus. This is Methionyl-tRNA formyltransferase from Synechococcus sp. (strain CC9605).